The primary structure comprises 141 residues: Cystatin (141 aa).

Residues 1-26 (MVHSQLPVAAPLRLLCALLLLPSATM) form the signal peptide. The Cystatin domain maps to 29–129 (GGLYPRSVTD…CHFQVWSRPW (101 aa)). Positions 73 to 77 (QVVTG) match the Secondary area of contact motif. Disulfide bonds link cysteine 91-cysteine 107 and cysteine 120-cysteine 140.

The protein belongs to the cystatin family. Expressed by the venom gland at an extremely low level (at protein level).

Its subcellular location is the secreted. Functionally, inhibits various C1 cysteine proteases including cathepsin L, papain and cathepsin B. This protein has no toxic activity and its function in the venom is unknown. It may play a role as a housekeeping or regulatory protein. This Tropidechis carinatus (Australian rough-scaled snake) protein is Cystatin.